Reading from the N-terminus, the 146-residue chain is Protein LDOC1 (146 aa).

This sequence belongs to the LDOC1 family. As to quaternary structure, interacts with NOD2. As to expression, ubiquitously expressed with high levels in brain ant thyroid and low expression in placenta, liver and leukocytes. Expressed as well in six of the seven human breast cancer cell lines examined.

It localises to the nucleus. Its function is as follows. May have an important role in the development and/or progression of some cancers. In Homo sapiens (Human), this protein is Protein LDOC1 (LDOC1).